Consider the following 433-residue polypeptide: MSAKKLFIQTLGCAMNVRDSEHMIAELTQKENYALTEDIKEADLILINTCSVREKPVHKLFSEVGGFEKVKKEGAKIGVCGCTASHLGNEIFKRAPYVDFVLGARNISKITQAIKTPKFMGIDIDYDESEFAFADFRNSIYKSYINISIGCDKHCTYCIVPHTRGDEISIPFNIIHKEAQKAVEKGAKEIFLLGQNVNNYGKRFRNEHKKMDFSDLLEELSTIEDLERIRFTSPHPLHMDDKFLEVFANNPKVCKSMHMPLQSGSSEILKAMKRGYTKKWYLNRALKLRELCPNVSISTDIIVAFPGESEKDFEETMDVLEKVRFEQIFSFKYSKRPLTKAATMSNQIDEETASRRLSTLQNRHSEILDEIVKKQENKTFKVLFEELRVGNSIAGRTDNNFLVQVEGSEELLGQFKEVKITNAKRMVLYGEII.

Positions 4-119 (KKLFIQTLGC…ITQAIKTPKF (116 aa)) constitute an MTTase N-terminal domain. Cys-13, Cys-50, Cys-82, Cys-151, Cys-155, and Cys-158 together coordinate [4Fe-4S] cluster. In terms of domain architecture, Radical SAM core spans 137–370 (RNSIYKSYIN…QNRHSEILDE (234 aa)). The TRAM domain maps to 373 to 433 (KKQENKTFKV…KRMVLYGEII (61 aa)).

The protein belongs to the methylthiotransferase family. MiaB subfamily. In terms of assembly, monomer. [4Fe-4S] cluster serves as cofactor.

It localises to the cytoplasm. It catalyses the reaction N(6)-dimethylallyladenosine(37) in tRNA + (sulfur carrier)-SH + AH2 + 2 S-adenosyl-L-methionine = 2-methylsulfanyl-N(6)-dimethylallyladenosine(37) in tRNA + (sulfur carrier)-H + 5'-deoxyadenosine + L-methionine + A + S-adenosyl-L-homocysteine + 2 H(+). Catalyzes the methylthiolation of N6-(dimethylallyl)adenosine (i(6)A), leading to the formation of 2-methylthio-N6-(dimethylallyl)adenosine (ms(2)i(6)A) at position 37 in tRNAs that read codons beginning with uridine. The sequence is that of tRNA-2-methylthio-N(6)-dimethylallyladenosine synthase from Campylobacter jejuni subsp. doylei (strain ATCC BAA-1458 / RM4099 / 269.97).